Here is a 281-residue protein sequence, read N- to C-terminus: UPF0273 protein PAE3143 (281 aa).

The KaiC domain occupies 4 to 248 (PRVRSYVPGL…YIKITGSSVR (245 aa)). Residue 31 to 38 (GGPGTGKS) participates in ATP binding.

This sequence belongs to the UPF0273 family.

This is UPF0273 protein PAE3143 from Pyrobaculum aerophilum (strain ATCC 51768 / DSM 7523 / JCM 9630 / CIP 104966 / NBRC 100827 / IM2).